The primary structure comprises 371 residues: MSKIGFNPIKIKSFSKIKTYDDTLPSLKYVVLEPAGFPIRVSSENVKVSTDDPILFNIYARDQWIGEIVKEGDYLFDNSILPDYAFKVISTYPKEGGMITSETVFKLQTPKKVLRTQFKKAKFSEIIGQEEAKKKCRIIMKYLENPKLFGEWAPKNVLFYGPPGTGKTLMARALATETNSSFILVKAPELIGEHVGDASKMIRELYQRASESAPCIVFIDELDAIGLSREYQSLRGDVSEVVNALLTELDGIKENEGVVTIAATNNPAMLDPAIRSRFEEEIEFKLPNDEERLKIMELYAKKMPLPVKANLKEFVEKTKGFSGRDIKEKFLKPALHRAILEDRDYVSKEDLEWALKKILGNRREAPQHLYL.

161 to 168 (GPPGTGKT) serves as a coordination point for ATP.

It belongs to the AAA ATPase family.

Functionally, the 26S proteasome is involved in the ATP-dependent degradation of ubiquitinated proteins. The regulatory (or ATPase) complex confers ATP dependency and substrate specificity to the 26S complex. The protein is Putative 26S proteasome regulatory subunit homolog MJ1494 of Methanocaldococcus jannaschii (strain ATCC 43067 / DSM 2661 / JAL-1 / JCM 10045 / NBRC 100440) (Methanococcus jannaschii).